A 597-amino-acid chain; its full sequence is 2-succinyl-5-enolpyruvyl-6-hydroxy-3-cyclohexene-1-carboxylate synthase (597 aa).

This sequence belongs to the TPP enzyme family. MenD subfamily. In terms of assembly, homodimer. Mg(2+) serves as cofactor. It depends on Mn(2+) as a cofactor. Requires thiamine diphosphate as cofactor.

It catalyses the reaction isochorismate + 2-oxoglutarate + H(+) = 5-enolpyruvoyl-6-hydroxy-2-succinyl-cyclohex-3-ene-1-carboxylate + CO2. The protein operates within quinol/quinone metabolism; 1,4-dihydroxy-2-naphthoate biosynthesis; 1,4-dihydroxy-2-naphthoate from chorismate: step 2/7. It participates in cofactor biosynthesis; phylloquinone biosynthesis. Catalyzes the thiamine diphosphate-dependent decarboxylation of 2-oxoglutarate and the subsequent addition of the resulting succinic semialdehyde-thiamine pyrophosphate anion to isochorismate to yield 2-succinyl-5-enolpyruvyl-6-hydroxy-3-cyclohexene-1-carboxylate (SEPHCHC). This Synechococcus sp. (strain JA-3-3Ab) (Cyanobacteria bacterium Yellowstone A-Prime) protein is 2-succinyl-5-enolpyruvyl-6-hydroxy-3-cyclohexene-1-carboxylate synthase.